Consider the following 145-residue polypeptide: MRVVIQRVNKAQVTIDNEVVGKIKRGFLLLVGLREGDELDQVKKAASKIAKMRIFEDENGKTNLSLKDVNGEILSVSQFTLLANTKKGNRPSFVEAMRPPKSKELWEDFNQELENKDFHVETGEFGADMQVSLENDGPFTIVLDI.

Residues 137–138 (GP) carry the Gly-cisPro motif, important for rejection of L-amino acids motif.

The protein belongs to the DTD family. In terms of assembly, homodimer.

The protein resides in the cytoplasm. It catalyses the reaction glycyl-tRNA(Ala) + H2O = tRNA(Ala) + glycine + H(+). It carries out the reaction a D-aminoacyl-tRNA + H2O = a tRNA + a D-alpha-amino acid + H(+). An aminoacyl-tRNA editing enzyme that deacylates mischarged D-aminoacyl-tRNAs. Also deacylates mischarged glycyl-tRNA(Ala), protecting cells against glycine mischarging by AlaRS. Acts via tRNA-based rather than protein-based catalysis; rejects L-amino acids rather than detecting D-amino acids in the active site. By recycling D-aminoacyl-tRNA to D-amino acids and free tRNA molecules, this enzyme counteracts the toxicity associated with the formation of D-aminoacyl-tRNA entities in vivo and helps enforce protein L-homochirality. The protein is D-aminoacyl-tRNA deacylase of Lactobacillus gasseri (strain ATCC 33323 / DSM 20243 / BCRC 14619 / CIP 102991 / JCM 1131 / KCTC 3163 / NCIMB 11718 / NCTC 13722 / AM63).